A 282-amino-acid polypeptide reads, in one-letter code: MIVTTKIQDMQTMMQQYRLEGKTIGFVPTMGYLHEGHIALLKKAREENDIVALSVFVNPLQFGPNEDFARYPRDIERDERIAKENGVDVFFCPSVEEMYPHPLSVQVTVKERVDVLCGKSRPGHFDGVATVLTKLFHIVMPTRAYFGMKDAQQVAVVDGLIRDFHFPIELVAVPTVREEDGLAKSSRNVYLSPEERKEAPALYQALQQAKTAIENGERNPETICALVKNYIQTHTHAEIDYVEVYSYPDLKPLEKLHGKVIIAVAVRFASARLIDNITLDIV.

Residue 30–37 participates in ATP binding; it reads MGYLHEGH. The Proton donor role is filled by histidine 37. Glutamine 61 is a binding site for (R)-pantoate. Glutamine 61 serves as a coordination point for beta-alanine. 147-150 contacts ATP; it reads GMKD. Glutamine 153 lines the (R)-pantoate pocket. ATP is bound by residues valine 176 and 184–187; that span reads KSSR.

It belongs to the pantothenate synthetase family. Homodimer.

The protein resides in the cytoplasm. The catalysed reaction is (R)-pantoate + beta-alanine + ATP = (R)-pantothenate + AMP + diphosphate + H(+). The protein operates within cofactor biosynthesis; (R)-pantothenate biosynthesis; (R)-pantothenate from (R)-pantoate and beta-alanine: step 1/1. Catalyzes the condensation of pantoate with beta-alanine in an ATP-dependent reaction via a pantoyl-adenylate intermediate. The chain is Pantothenate synthetase from Geobacillus sp. (strain WCH70).